Reading from the N-terminus, the 907-residue chain is Protein MEI2-like 4 (907 aa).

Positions 28 to 58 (QFGFMKNNPMPEGGVDRSSNLPTSSWTSDSY) are disordered. Polar residues predominate over residues 44–54 (RSSNLPTSSWT). 2 consecutive RRM domains span residues 211 to 284 (RILF…YSIP) and 295 to 368 (GALW…PTCP). Residues 856–907 (AGPNAGDQEPFPMGSNIRSRPGKHRTNSIENYTNFSSSSDNRDEPANGNDSM) form a disordered region. Residues 883–894 (SIENYTNFSSSS) show a composition bias toward polar residues.

Functionally, probable RNA-binding protein that plays a role in meiosis and vegetative growth. The sequence is that of Protein MEI2-like 4 (ML4) from Arabidopsis thaliana (Mouse-ear cress).